The chain runs to 726 residues: Catalase-peroxidase (726 aa).

The span at Met-1–Ser-12 shows a compositional bias: polar residues. The segment at Met-1–Arg-34 is disordered. A cross-link (tryptophyl-tyrosyl-methioninium (Trp-Tyr) (with M-252)) is located at residues Trp-105–Tyr-226. The Proton acceptor role is filled by His-106. A cross-link (tryptophyl-tyrosyl-methioninium (Tyr-Met) (with W-105)) is located at residues Tyr-226–Met-252. His-267 is a binding site for heme b.

Belongs to the peroxidase family. Peroxidase/catalase subfamily. As to quaternary structure, homodimer or homotetramer. Heme b serves as cofactor. In terms of processing, formation of the three residue Trp-Tyr-Met cross-link is important for the catalase, but not the peroxidase activity of the enzyme.

The catalysed reaction is H2O2 + AH2 = A + 2 H2O. The enzyme catalyses 2 H2O2 = O2 + 2 H2O. In terms of biological role, bifunctional enzyme with both catalase and broad-spectrum peroxidase activity. This Cronobacter sakazakii (strain ATCC BAA-894) (Enterobacter sakazakii) protein is Catalase-peroxidase.